The chain runs to 512 residues: Cytochrome P450 1A1 (512 aa).

Residues 29 to 40 (SRPRVPKGLKNP) form a mitochondrial targeting signal region. The O-linked (GlcNAc) serine glycan is linked to Ser-67. Position 224 (Phe-224) interacts with substrate. Cys-457 is a heme binding site.

This sequence belongs to the cytochrome P450 family. As to quaternary structure, interacts with cytosolic chaperones HSP70 and HSP90; this interaction is required for initial targeting to mitochondria. Interacts (via mitochondrial targeting signal) with TOMM40 (via N-terminus); this interaction is required for translocation across the mitochondrial outer membrane. The cofactor is heme.

Its subcellular location is the endoplasmic reticulum membrane. It localises to the mitochondrion inner membrane. The protein resides in the microsome membrane. The protein localises to the cytoplasm. It catalyses the reaction an organic molecule + reduced [NADPH--hemoprotein reductase] + O2 = an alcohol + oxidized [NADPH--hemoprotein reductase] + H2O + H(+). The enzyme catalyses estrone + reduced [NADPH--hemoprotein reductase] + O2 = 2-hydroxyestrone + oxidized [NADPH--hemoprotein reductase] + H2O + H(+). It carries out the reaction estrone + reduced [NADPH--hemoprotein reductase] + O2 = 4-hydroxyestrone + oxidized [NADPH--hemoprotein reductase] + H2O + H(+). The catalysed reaction is estrone + reduced [NADPH--hemoprotein reductase] + O2 = 6alpha-hydroxyestrone + oxidized [NADPH--hemoprotein reductase] + H2O + H(+). It catalyses the reaction estrone + reduced [NADPH--hemoprotein reductase] + O2 = 15alpha-hydroxyestrone + oxidized [NADPH--hemoprotein reductase] + H2O + H(+). The enzyme catalyses estrone + reduced [NADPH--hemoprotein reductase] + O2 = 16alpha-hydroxyestrone + oxidized [NADPH--hemoprotein reductase] + H2O + H(+). It carries out the reaction 17beta-estradiol + reduced [NADPH--hemoprotein reductase] + O2 = 2-hydroxy-17beta-estradiol + oxidized [NADPH--hemoprotein reductase] + H2O + H(+). The catalysed reaction is 17beta-estradiol + reduced [NADPH--hemoprotein reductase] + O2 = 4-hydroxy-17beta-estradiol + oxidized [NADPH--hemoprotein reductase] + H2O + H(+). It catalyses the reaction 17beta-estradiol + reduced [NADPH--hemoprotein reductase] + O2 = 6alpha-hydroxy-17beta-estradiol + oxidized [NADPH--hemoprotein reductase] + H2O + H(+). The enzyme catalyses 17beta-estradiol + reduced [NADPH--hemoprotein reductase] + O2 = 7alpha-hydroxy-17beta-estradiol + oxidized [NADPH--hemoprotein reductase] + H2O + H(+). It carries out the reaction 17beta-estradiol + reduced [NADPH--hemoprotein reductase] + O2 = 15alpha-hydroxy-17beta-estradiol + oxidized [NADPH--hemoprotein reductase] + H2O + H(+). The catalysed reaction is (5Z,8Z,11Z)-eicosatrienoate + reduced [NADPH--hemoprotein reductase] + O2 = 19-hydroxy-(5Z,8Z,11Z)-eicosatrienoate + oxidized [NADPH--hemoprotein reductase] + H2O + H(+). It catalyses the reaction (5Z,8Z,11Z,14Z)-eicosatetraenoate + reduced [NADPH--hemoprotein reductase] + O2 = 16-hydroxy-(5Z,8Z,11Z,14Z)-eicosatetraenoate + oxidized [NADPH--hemoprotein reductase] + H2O + H(+). The enzyme catalyses (5Z,8Z,11Z,14Z)-eicosatetraenoate + reduced [NADPH--hemoprotein reductase] + O2 = 17-hydroxy-(5Z,8Z,11Z,14Z)-eicosatetraenoate + oxidized [NADPH--hemoprotein reductase] + H2O + H(+). It carries out the reaction (5Z,8Z,11Z,14Z)-eicosatetraenoate + reduced [NADPH--hemoprotein reductase] + O2 = 18-hydroxy-(5Z,8Z,11Z,14Z)-eicosatetraenoate + oxidized [NADPH--hemoprotein reductase] + H2O + H(+). The catalysed reaction is (5Z,8Z,11Z,14Z)-eicosatetraenoate + reduced [NADPH--hemoprotein reductase] + O2 = 19-hydroxy-(5Z,8Z,11Z,14Z)-eicosatetraenoate + oxidized [NADPH--hemoprotein reductase] + H2O + H(+). It catalyses the reaction (5Z,8Z,11Z,14Z,17Z)-eicosapentaenoate + reduced [NADPH--hemoprotein reductase] + O2 = 19-hydroxy-(5Z,8Z,11Z,14Z,17Z)-eicosapentaenoate + oxidized [NADPH--hemoprotein reductase] + H2O + H(+). The enzyme catalyses (5Z,8Z,11Z,14Z)-eicosatetraenoate + reduced [NADPH--hemoprotein reductase] + O2 = (8R,9S)-epoxy-(5Z,11Z,14Z)-eicosatrienoate + oxidized [NADPH--hemoprotein reductase] + H2O + H(+). It carries out the reaction (5Z,8Z,11Z,14Z)-eicosatetraenoate + reduced [NADPH--hemoprotein reductase] + O2 = (11R,12S)-epoxy-(5Z,8Z,14Z)-eicosatrienoate + oxidized [NADPH--hemoprotein reductase] + H2O + H(+). The catalysed reaction is (5Z,8Z,11Z,14Z)-eicosatetraenoate + reduced [NADPH--hemoprotein reductase] + O2 = (14S,15R)-epoxy-(5Z,8Z,11Z)-eicosatrienoate + oxidized [NADPH--hemoprotein reductase] + H2O + H(+). It catalyses the reaction (5Z,8Z,11Z,14Z)-eicosatetraenoate + reduced [NADPH--hemoprotein reductase] + O2 = (14R,15S)-epoxy-(5Z,8Z,11Z)-eicosatrienoate + oxidized [NADPH--hemoprotein reductase] + H2O + H(+). The enzyme catalyses (5Z,8Z,11Z,14Z,17Z)-eicosapentaenoate + reduced [NADPH--hemoprotein reductase] + O2 = (17R,18S)-epoxy-(5Z,8Z,11Z,14Z)-eicosatetraenoate + oxidized [NADPH--hemoprotein reductase] + H2O + H(+). It carries out the reaction (4Z,7Z,10Z,13Z,16Z,19Z)-docosahexaenoate + reduced [NADPH--hemoprotein reductase] + O2 = (19S,20R)-epoxy-(4Z,7Z,10Z,13Z,16Z)-docosapentaenoate + oxidized [NADPH--hemoprotein reductase] + H2O + H(+). The catalysed reaction is (4Z,7Z,10Z,13Z,16Z,19Z)-docosahexaenoate + reduced [NADPH--hemoprotein reductase] + O2 = (19R,20S)-epoxy-(4Z,7Z,10Z,13Z,16Z)-docosapentaenoate + oxidized [NADPH--hemoprotein reductase] + H2O + H(+). It catalyses the reaction all-trans-retinol + reduced [NADPH--hemoprotein reductase] + O2 = all-trans-retinal + oxidized [NADPH--hemoprotein reductase] + 2 H2O + H(+). The enzyme catalyses all-trans-retinal + reduced [NADPH--hemoprotein reductase] + O2 = all-trans-retinoate + oxidized [NADPH--hemoprotein reductase] + H2O + 2 H(+). It carries out the reaction (13S)-hydroperoxy-(9Z,11E)-octadecadienoate = 13-oxo-(9Z,11E)-octadecadienoate + H2O. The catalysed reaction is (12S)-hydroperoxy-(5Z,8Z,10E,14Z)-eicosatetraenoate = 12-oxo-(5Z,8Z,10E,14Z)-eicosatetraenoate + H2O. It catalyses the reaction (15S)-hydroperoxy-(5Z,8Z,11Z,13E)-eicosatetraenoate = 15-oxo-(5Z,8Z,11Z,13E)-eicosatetraenoate + H2O. The enzyme catalyses (5S)-hydroperoxy-(6E,8Z,11Z,14Z)-eicosatetraenoate = 5-oxo-(6E,8Z,11Z,14Z)-eicosatetraenoate + H2O. It functions in the pathway steroid hormone biosynthesis. Its pathway is lipid metabolism; fatty acid metabolism. The protein operates within cofactor metabolism; retinol metabolism. Functionally, a cytochrome P450 monooxygenase involved in the metabolism of various endogenous substrates, including fatty acids, steroid hormones and vitamins. Mechanistically, uses molecular oxygen inserting one oxygen atom into a substrate, and reducing the second into a water molecule, with two electrons provided by NADPH via cytochrome P450 reductase (CPR; NADPH-ferrihemoprotein reductase). Catalyzes the hydroxylation of carbon-hydrogen bonds. Exhibits high catalytic activity for the formation of hydroxyestrogens from estrone (E1) and 17beta-estradiol (E2), namely 2-hydroxy E1 and E2, as well as D-ring hydroxylated E1 and E2 at the C15alpha and C16alpha positions. Displays different regioselectivities for polyunsaturated fatty acids (PUFA) hydroxylation. Catalyzes the epoxidation of double bonds of certain PUFA. Converts arachidonic acid toward epoxyeicosatrienoic acid (EET) regioisomers, 8,9-, 11,12-, and 14,15-EET, that function as lipid mediators in the vascular system. Displays an absolute stereoselectivity in the epoxidation of eicosapentaenoic acid (EPA) producing the 17(R),18(S) enantiomer. May play an important role in all-trans retinoic acid biosynthesis in extrahepatic tissues. Catalyzes two successive oxidative transformation of all-trans retinol to all-trans retinal and then to the active form all-trans retinoic acid. May also participate in eicosanoids metabolism by converting hydroperoxide species into oxo metabolites (lipoxygenase-like reaction, NADPH-independent). The protein is Cytochrome P450 1A1 (CYP1A1) of Macaca fascicularis (Crab-eating macaque).